Consider the following 138-residue polypeptide: Ribulose bisphosphate carboxylase small subunit (138 aa).

Belongs to the RuBisCO small chain family. Heterohexadecamer of 8 large and 8 small subunits.

The protein localises to the plastid. Its subcellular location is the chloroplast. Its function is as follows. RuBisCO catalyzes two reactions: the carboxylation of D-ribulose 1,5-bisphosphate, the primary event in carbon dioxide fixation, as well as the oxidative fragmentation of the pentose substrate in the photorespiration process. Both reactions occur simultaneously and in competition at the same active site. Although the small subunit is not catalytic it is essential for maximal activity. The polypeptide is Ribulose bisphosphate carboxylase small subunit (Pyropia yezoensis (Susabi-nori)).